Here is a 411-residue protein sequence, read N- to C-terminus: Glutamyl-tRNA reductase (411 aa).

Substrate contacts are provided by residues 49-52, serine 99, 104-106, and glutamine 110; these read TCNR and ENE. Catalysis depends on cysteine 50, which acts as the Nucleophile. 179–184 lines the NADP(+) pocket; sequence GAGEAG.

This sequence belongs to the glutamyl-tRNA reductase family. Homodimer.

It carries out the reaction (S)-4-amino-5-oxopentanoate + tRNA(Glu) + NADP(+) = L-glutamyl-tRNA(Glu) + NADPH + H(+). Its pathway is porphyrin-containing compound metabolism; protoporphyrin-IX biosynthesis; 5-aminolevulinate from L-glutamyl-tRNA(Glu): step 1/2. Functionally, catalyzes the NADPH-dependent reduction of glutamyl-tRNA(Glu) to glutamate 1-semialdehyde (GSA). The polypeptide is Glutamyl-tRNA reductase (Hyperthermus butylicus (strain DSM 5456 / JCM 9403 / PLM1-5)).